Reading from the N-terminus, the 259-residue chain is 5'-nucleotidase SurE (259 aa).

4 residues coordinate a divalent metal cation: aspartate 13, aspartate 14, serine 44, and asparagine 100.

Belongs to the SurE nucleotidase family. A divalent metal cation serves as cofactor.

The protein localises to the cytoplasm. The enzyme catalyses a ribonucleoside 5'-phosphate + H2O = a ribonucleoside + phosphate. Functionally, nucleotidase that shows phosphatase activity on nucleoside 5'-monophosphates. The polypeptide is 5'-nucleotidase SurE (Bacteroides thetaiotaomicron (strain ATCC 29148 / DSM 2079 / JCM 5827 / CCUG 10774 / NCTC 10582 / VPI-5482 / E50)).